Here is a 290-residue protein sequence, read N- to C-terminus: Feruloyl esterase D (290 aa).

Residues 1–25 form the signal peptide; that stretch reads MAGLHSRLTTFLLLLLSALPAIAAA. The segment at 260–280 is disordered; the sequence is HGGDHNPSQRDPGQNDPFAPR.

Belongs to the serine esterase family.

It localises to the secreted. The catalysed reaction is feruloyl-polysaccharide + H2O = ferulate + polysaccharide.. Functionally, involved in degradation of plant cell walls. Hydrolyzes the feruloyl-arabinose ester bond in arabinoxylans as well as the feruloyl-galactose and feruloyl-arabinose ester bonds in pectin. Active against methyl esters of ferulate (MFA), sinapate (MSA), caffeate (MCA) and p-coumarate (MpCA). The sequence is that of Feruloyl esterase D from Neurospora crassa (strain ATCC 24698 / 74-OR23-1A / CBS 708.71 / DSM 1257 / FGSC 987).